We begin with the raw amino-acid sequence, 410 residues long: 2-oxoisovalerate dehydrogenase subunit alpha (410 aa).

It belongs to the BCKDHA family. As to quaternary structure, heterodimer of an alpha and a beta chain. The cofactor is thiamine diphosphate.

It catalyses the reaction N(6)-[(R)-lipoyl]-L-lysyl-[protein] + 3-methyl-2-oxobutanoate + H(+) = N(6)-[(R)-S(8)-2-methylpropanoyldihydrolipoyl]-L-lysyl-[protein] + CO2. In terms of biological role, the branched-chain alpha-keto dehydrogenase complex catalyzes the overall conversion of alpha-keto acids to acyl-CoA and CO(2). It contains multiple copies of three enzymatic components: branched-chain alpha-keto acid decarboxylase (E1), lipoamide acyltransferase (E2) and lipoamide dehydrogenase (E3). The polypeptide is 2-oxoisovalerate dehydrogenase subunit alpha (bkdA1) (Pseudomonas putida (Arthrobacter siderocapsulatus)).